Reading from the N-terminus, the 317-residue chain is Protein CbxX, chromosomal (317 aa).

The segment at 1–21 (MSAPETTAPLQPPAAPAASLP) is disordered. Residue 85–92 (GNPGTGKT) participates in ATP binding.

The protein belongs to the CbxX/CfxQ family.

Seems to be necessary for the expression of RuBisCO. The chain is Protein CbxX, chromosomal (cbxXC) from Cupriavidus necator (strain ATCC 17699 / DSM 428 / KCTC 22496 / NCIMB 10442 / H16 / Stanier 337) (Ralstonia eutropha).